The primary structure comprises 164 residues: Probable metalloprotease y4qB (164 aa).

Residues isoleucine 5 to leucine 142 enclose the MPN domain. Residues histidine 89, histidine 91, and aspartate 103 each coordinate Zn(2+).

It belongs to the peptidase M67B family.

The sequence is that of Probable metalloprotease y4qB from Sinorhizobium fredii (strain NBRC 101917 / NGR234).